Here is a 154-residue protein sequence, read N- to C-terminus: SsrA-binding protein (154 aa).

The interval 134 to 154 is disordered; that stretch reads KRQAIKERQTQREIQRELKER.

The protein belongs to the SmpB family.

Its subcellular location is the cytoplasm. Functionally, required for rescue of stalled ribosomes mediated by trans-translation. Binds to transfer-messenger RNA (tmRNA), required for stable association of tmRNA with ribosomes. tmRNA and SmpB together mimic tRNA shape, replacing the anticodon stem-loop with SmpB. tmRNA is encoded by the ssrA gene; the 2 termini fold to resemble tRNA(Ala) and it encodes a 'tag peptide', a short internal open reading frame. During trans-translation Ala-aminoacylated tmRNA acts like a tRNA, entering the A-site of stalled ribosomes, displacing the stalled mRNA. The ribosome then switches to translate the ORF on the tmRNA; the nascent peptide is terminated with the 'tag peptide' encoded by the tmRNA and targeted for degradation. The ribosome is freed to recommence translation, which seems to be the essential function of trans-translation. This chain is SsrA-binding protein, found in Synechococcus sp. (strain JA-2-3B'a(2-13)) (Cyanobacteria bacterium Yellowstone B-Prime).